The primary structure comprises 400 residues: Enoyl-[acyl-carrier-protein] reductase [NADH] (400 aa).

Residues 48-53, 74-75, 111-112, and 139-140 each bind NAD(+); these read GASTGY, FE, DA, and LA. Position 225 (Y225) interacts with substrate. Catalysis depends on Y235, which acts as the Proton donor. Residues K244 and 273 to 275 contribute to the NAD(+) site; that span reads VVT.

The protein belongs to the TER reductase family. Monomer.

The catalysed reaction is a 2,3-saturated acyl-[ACP] + NAD(+) = a (2E)-enoyl-[ACP] + NADH + H(+). Its pathway is lipid metabolism; fatty acid biosynthesis. Its function is as follows. Involved in the final reduction of the elongation cycle of fatty acid synthesis (FAS II). Catalyzes the reduction of a carbon-carbon double bond in an enoyl moiety that is covalently linked to an acyl carrier protein (ACP). The polypeptide is Enoyl-[acyl-carrier-protein] reductase [NADH] (Burkholderia vietnamiensis (strain G4 / LMG 22486) (Burkholderia cepacia (strain R1808))).